The following is a 287-amino-acid chain: Undecaprenyl-diphosphatase (287 aa).

Helical transmembrane passes span 6 to 26, 45 to 65, 89 to 109, 111 to 131, 204 to 224, 238 to 258, and 266 to 286; these read LHLL…FIPV, SGKV…MWIF, NLLL…KSIK, VFYH…IMLW, ATEF…VYDL, AIAV…RAVL, and YRVF…WIYA.

The protein belongs to the UppP family.

It is found in the cell inner membrane. It catalyses the reaction di-trans,octa-cis-undecaprenyl diphosphate + H2O = di-trans,octa-cis-undecaprenyl phosphate + phosphate + H(+). Its function is as follows. Catalyzes the dephosphorylation of undecaprenyl diphosphate (UPP). Confers resistance to bacitracin. In Bordetella bronchiseptica (strain ATCC BAA-588 / NCTC 13252 / RB50) (Alcaligenes bronchisepticus), this protein is Undecaprenyl-diphosphatase.